The chain runs to 211 residues: Ribonuclease T (211 aa).

The region spanning 24–198 (VVVDVETGGF…YDAEKTAHLF (175 aa)) is the Exonuclease domain. Mg(2+) is bound by residues aspartate 27, glutamate 29, histidine 185, and aspartate 190. Histidine 185 functions as the Proton donor/acceptor in the catalytic mechanism.

Belongs to the RNase T family. In terms of assembly, homodimer. Mg(2+) serves as cofactor.

Trims short 3' overhangs of a variety of RNA species, leaving a one or two nucleotide 3' overhang. Responsible for the end-turnover of tRNA: specifically removes the terminal AMP residue from uncharged tRNA (tRNA-C-C-A). Also appears to be involved in tRNA biosynthesis. In Xylella fastidiosa (strain 9a5c), this protein is Ribonuclease T.